The primary structure comprises 540 residues: Na(+)/H(+) antiporter NhaS2 (540 aa).

10 helical membrane-spanning segments follow: residues 29–49, 71–91, 117–137, 138–158, 207–227, 256–276, 296–316, 323–343, 358–378, and 389–409; these read ITTLVENLIILLLVATLVALV, GLSVGLNPELILNFFLPILIF, VVISAAITAVLLKIGLGLAWV, TAAGVSVILTITDTVSVIAAF, IFVAFVGGGLVGLGLGYLCVG, LGVSSAIAVVVAGLVIGNLAL, FGVNTLIFLLVGIEVYPSILL, LIAIVAYQIGRVFSIYPLLYL, VLIAGNVKGSLSMALALALPL, and LVFSTVMVSLIGQGLSLPWVV.

Belongs to the monovalent cation:proton antiporter 1 (CPA1) transporter (TC 2.A.36) family.

It is found in the cell membrane. Required for Na(+) uptake into the cell, especially at low external Na(+) concentrations or low Na(+)/K(+) ratios. May be part of a sodium cycle that permits re-entry of sodium into the cell. The chain is Na(+)/H(+) antiporter NhaS2 (nhaS2) from Synechocystis sp. (strain ATCC 27184 / PCC 6803 / Kazusa).